Consider the following 436-residue polypeptide: GTPase Der (436 aa).

EngA-type G domains lie at 4–167 and 176–351; these read PVIA…PKIE and IRFS…ESHS. Residues 10-17, 57-61, 119-122, 182-189, 229-233, and 294-297 each bind GTP; these read GRPNVGKS, DTGGI, NKVD, DTAGM, and NKWD. Positions 352–436 constitute a KH-like domain; sequence IRVQTNVLND…PIHIIARARD (85 aa).

This sequence belongs to the TRAFAC class TrmE-Era-EngA-EngB-Septin-like GTPase superfamily. EngA (Der) GTPase family. In terms of assembly, associates with the 50S ribosomal subunit.

Functionally, GTPase that plays an essential role in the late steps of ribosome biogenesis. This Bacillus cereus (strain G9842) protein is GTPase Der.